The primary structure comprises 558 residues: Formate--tetrahydrofolate ligase (558 aa).

66-73 (TPAGEGKT) contributes to the ATP binding site.

This sequence belongs to the formate--tetrahydrofolate ligase family.

The enzyme catalyses (6S)-5,6,7,8-tetrahydrofolate + formate + ATP = (6R)-10-formyltetrahydrofolate + ADP + phosphate. The protein operates within one-carbon metabolism; tetrahydrofolate interconversion. The chain is Formate--tetrahydrofolate ligase from Neisseria meningitidis serogroup C (strain 053442).